Reading from the N-terminus, the 464-residue chain is Cysteine--tRNA ligase (464 aa).

Position 27 (C27) interacts with Zn(2+). A 'HIGH' region motif is present at residues 29 to 39; that stretch reads PTVYNYFHIGN. Residues C207, H232, and E236 each coordinate Zn(2+). The 'KMSKS' region motif lies at 264–268; sequence KMSKS. K267 contacts ATP.

Belongs to the class-I aminoacyl-tRNA synthetase family. As to quaternary structure, monomer. The cofactor is Zn(2+).

It localises to the cytoplasm. It catalyses the reaction tRNA(Cys) + L-cysteine + ATP = L-cysteinyl-tRNA(Cys) + AMP + diphosphate. This chain is Cysteine--tRNA ligase, found in Alkaliphilus oremlandii (strain OhILAs) (Clostridium oremlandii (strain OhILAs)).